The following is a 1299-amino-acid chain: Outer capsid protein VP1 (1299 aa).

This sequence belongs to the aquareoviridae outer capsid VP1 protein family.

It localises to the virion. It carries out the reaction a 5'-end diphospho-ribonucleoside in mRNA + GTP + H(+) = a 5'-end (5'-triphosphoguanosine)-ribonucleoside in mRNA + diphosphate. The catalysed reaction is a 5'-end (5'-triphosphoguanosine)-ribonucleoside in mRNA + S-adenosyl-L-methionine = a 5'-end (N(7)-methyl 5'-triphosphoguanosine)-ribonucleoside in mRNA + S-adenosyl-L-homocysteine. Functionally, outer capsid protein involved in mRNA capping. Catalyzes the last 3 enzymatic activities for formation of the 5' cap structure on the viral plus-strand transcripts, namely the RNA guanylyltransferase, RNA-7N- and RNA-2'O-methyltransferase activities. This Aquareovirus C (isolate Golden shiner/USA/GSRV/1977) (AQRV-C) protein is Outer capsid protein VP1 (S1).